Here is a 134-residue protein sequence, read N- to C-terminus: Small ribosomal subunit protein uS11 (134 aa).

It belongs to the universal ribosomal protein uS11 family. Part of the 30S ribosomal subunit. Interacts with proteins S7 and S18. Binds to IF-3.

Its function is as follows. Located on the platform of the 30S subunit, it bridges several disparate RNA helices of the 16S rRNA. Forms part of the Shine-Dalgarno cleft in the 70S ribosome. In Polaromonas naphthalenivorans (strain CJ2), this protein is Small ribosomal subunit protein uS11.